We begin with the raw amino-acid sequence, 277 residues long: Pantothenate synthetase (277 aa).

26–33 provides a ligand contact to ATP; sequence MGNLHEGH. Residue His-33 is the Proton donor of the active site. Gln-57 lines the (R)-pantoate pocket. Position 57 (Gln-57) interacts with beta-alanine. 144–147 is an ATP binding site; that stretch reads GKKD. Gln-150 is a (R)-pantoate binding site. ATP-binding positions include Val-173 and 181 to 184; that span reads LSSR.

Belongs to the pantothenate synthetase family. Homodimer.

The protein resides in the cytoplasm. It carries out the reaction (R)-pantoate + beta-alanine + ATP = (R)-pantothenate + AMP + diphosphate + H(+). The protein operates within cofactor biosynthesis; (R)-pantothenate biosynthesis; (R)-pantothenate from (R)-pantoate and beta-alanine: step 1/1. Catalyzes the condensation of pantoate with beta-alanine in an ATP-dependent reaction via a pantoyl-adenylate intermediate. The sequence is that of Pantothenate synthetase from Paraburkholderia xenovorans (strain LB400).